A 381-amino-acid chain; its full sequence is cAMP-dependent protein kinase type I-alpha regulatory subunit (381 aa).

N-acetylmethionine is present on Met-1. The residue at position 2 (Ala-2) is an N-acetylalanine; in cAMP-dependent protein kinase type I-alpha regulatory subunit, N-terminally processed. The interval 2–136 is dimerization and phosphorylation; it reads ASGSMATSEE…ALAKAIEKNV (135 aa). Ser-3 is subject to Phosphoserine. The segment at 73–96 is disordered; that stretch reads IRTDSREDEISPPPPNPVVKGRRR. Phosphothreonine is present on Thr-75. Phosphoserine occurs at positions 77 and 83. The Pseudophosphorylation motif signature appears at 96–100; it reads RRGAI. At Ser-101 the chain carries Phosphoserine. 3',5'-cyclic AMP is bound by residues 137–254, Glu-202, Arg-211, 255–381, Glu-326, and Arg-335; these read LFSH…SKVS and ILES…SLSV. Ser-258 carries the post-translational modification Phosphoserine.

It belongs to the cAMP-dependent kinase regulatory chain family. As to quaternary structure, the inactive holoenzyme is composed of two regulatory chains and two catalytic chains. Activation by cAMP releases the two active catalytic monomers and the regulatory dimer. Interacts with PRKACA and PRKACB. PRKAR1A also interacts with RFC2; the complex may be involved in cell survival. Interacts with AKAP4. Interacts with RARA; the interaction occurs in the presence of cAMP or FSH and regulates RARA transcriptional activity. Interacts with the phosphorylated form of PJA2. Interacts with PRKX; regulates this cAMP-dependent protein kinase. Interacts with CBFA2T3. Interacts with smAKAP; this interaction may target PRKAR1A to the plasma membrane. Interacts with AICDA. In terms of processing, the pseudophosphorylation site binds to the substrate-binding region of the catalytic chain, resulting in the inhibition of its activity.

It is found in the cell membrane. Functionally, regulatory subunit of the cAMP-dependent protein kinases involved in cAMP signaling in cells. In Mus musculus (Mouse), this protein is cAMP-dependent protein kinase type I-alpha regulatory subunit (Prkar1a).